The chain runs to 263 residues: Acyl-[acyl-carrier-protein]--UDP-N-acetylglucosamine O-acyltransferase (263 aa).

The protein belongs to the transferase hexapeptide repeat family. LpxA subfamily. As to quaternary structure, homotrimer.

Its subcellular location is the cytoplasm. It catalyses the reaction a (3R)-hydroxyacyl-[ACP] + UDP-N-acetyl-alpha-D-glucosamine = a UDP-3-O-[(3R)-3-hydroxyacyl]-N-acetyl-alpha-D-glucosamine + holo-[ACP]. It functions in the pathway glycolipid biosynthesis; lipid IV(A) biosynthesis; lipid IV(A) from (3R)-3-hydroxytetradecanoyl-[acyl-carrier-protein] and UDP-N-acetyl-alpha-D-glucosamine: step 1/6. Its function is as follows. Involved in the biosynthesis of lipid A, a phosphorylated glycolipid that anchors the lipopolysaccharide to the outer membrane of the cell. The chain is Acyl-[acyl-carrier-protein]--UDP-N-acetylglucosamine O-acyltransferase from Caulobacter vibrioides (strain ATCC 19089 / CIP 103742 / CB 15) (Caulobacter crescentus).